The sequence spans 47 residues: PhoP/PhoQ regulator MgrB (47 aa).

A helical transmembrane segment spans residues 6–26; it reads WLVLIVVVLACLVLWAQVINI.

It belongs to the MgrB family. May form homooligomers. Probably interacts with the periplasmic domain of PhoQ.

It localises to the cell inner membrane. Functionally, phoP-regulated transcription is redox-sensitive, being activated when the periplasm becomes more reducing. MgrB acts between DsbA/DsbB and PhoP/PhoQ in this pathway. Represses PhoP/PhoQ signaling, possibly by binding to the periplasmic domain of PhoQ, altering its activity and that of downstream effector PhoP. This chain is PhoP/PhoQ regulator MgrB, found in Escherichia fergusonii (strain ATCC 35469 / DSM 13698 / CCUG 18766 / IAM 14443 / JCM 21226 / LMG 7866 / NBRC 102419 / NCTC 12128 / CDC 0568-73).